The primary structure comprises 312 residues: tRNA-dihydrouridine(16) synthase (312 aa).

Residues 7-9 (PMQ) and Gln-68 contribute to the FMN site. Catalysis depends on Cys-98, which acts as the Proton donor. FMN-binding positions include Lys-139, 200–202 (NGE), and 224–225 (GR).

This sequence belongs to the Dus family. DusC subfamily. FMN is required as a cofactor.

It carries out the reaction 5,6-dihydrouridine(16) in tRNA + NADP(+) = uridine(16) in tRNA + NADPH + H(+). It catalyses the reaction 5,6-dihydrouridine(16) in tRNA + NAD(+) = uridine(16) in tRNA + NADH + H(+). Its function is as follows. Catalyzes the synthesis of 5,6-dihydrouridine (D), a modified base found in the D-loop of most tRNAs, via the reduction of the C5-C6 double bond in target uridines. Specifically modifies U16 in tRNAs. The chain is tRNA-dihydrouridine(16) synthase from Pasteurella multocida (strain Pm70).